A 467-amino-acid chain; its full sequence is Glutamate--tRNA ligase (467 aa).

The 'HIGH' region motif lies at 9–19 (PSPTGYLHIGG). The 'KMSKS' region motif lies at 237 to 241 (KLSKR). ATP is bound at residue Lys-240.

It belongs to the class-I aminoacyl-tRNA synthetase family. Glutamate--tRNA ligase type 1 subfamily. As to quaternary structure, monomer.

The protein localises to the cytoplasm. It carries out the reaction tRNA(Glu) + L-glutamate + ATP = L-glutamyl-tRNA(Glu) + AMP + diphosphate. Catalyzes the attachment of glutamate to tRNA(Glu) in a two-step reaction: glutamate is first activated by ATP to form Glu-AMP and then transferred to the acceptor end of tRNA(Glu). This chain is Glutamate--tRNA ligase, found in Xanthomonas euvesicatoria pv. vesicatoria (strain 85-10) (Xanthomonas campestris pv. vesicatoria).